The following is a 1891-amino-acid chain: Transcription initiation factor TFIID subunit 1 (1891 aa).

3 disordered regions span residues 1 to 34 (MGPG…AGGG), 154 to 180 (KLMP…GVSE), and 197 to 224 (ASEK…SESK). A Protein kinase 1 domain is found at 1–435 (MGPGWAGLLQ…VTQLHWEDDI (435 aa)). Positions 156 to 165 (MPPPPPPPGP) are enriched in pro residues. Residues 197-208 (ASEKVDFSSSSD) are compositionally biased toward low complexity. Serine 328 carries the post-translational modification Phosphoserine; by autocatalysis. A disordered region spans residues 535 to 556 (PDEKEEATSNSPSKENKKESSL). The histone acetyltransferase (HAT) stretch occupies residues 538–997 (KEEATSNSPS…KIPNKPTQQK (460 aa)). Position 565 is an N6-acetyllysine (lysine 565). Glycyl lysine isopeptide (Lys-Gly) (interchain with G-Cter in SUMO2) cross-links involve residues lysine 570 and lysine 583. Disordered regions lie at residues 990–1009 (PNKP…KKTV), 1128–1148 (MLQN…QERK), and 1254–1278 (RLKR…MKER). 3 stretches are compositionally biased toward basic and acidic residues: residues 995–1004 (QQKDDKEPQP), 1139–1148 (SREREEQERK), and 1254–1270 (RLKR…PPEK). Positions 1216 to 1294 (VRIRTTKDEE…CGACGAIGHM (79 aa)) form a DNA-binding region, HMG box. Positions 1363–1650 (VLKFPKQQLP…TAKEAALEEA (288 aa)) are interaction with ASF1A and ASF1B. The Nuclear localization signal motif lies at 1372–1379 (PPKKKRRV). 2 consecutive Bromo domains span residues 1397-1505 (RRRT…LKEK) and 1519-1628 (LLDD…LTEY). A Protein kinase 2 domain is found at 1446 to 1891 (MDLQTLRENV…AGDTDLDSDE (446 aa)). 2 disordered regions span residues 1651–1676 (ELES…NNTS) and 1690–1891 (SNLS…DSDE). Residues 1659–1668 (TPGPYTPQPP) are compositionally biased toward pro residues. 2 positions are modified to phosphoserine: serine 1690 and serine 1693. Positions 1690-1708 (SNLSVLDIPSATSEKQLTQ) are enriched in polar residues. Composition is skewed to acidic residues over residues 1711 to 1723 (GDGD…EEEG) and 1741 to 1756 (EGED…EEGD). Low complexity predominate over residues 1764 to 1778 (LSESGSDSDVESGSL). A phosphoserine mark is found at serine 1799, serine 1802, and serine 1820. A compositionally biased stretch (polar residues) spans 1830-1840 (KSNTQDTSFSS). Acidic residues predominate over residues 1846–1855 (VSEEEEDEEE). Serine 1847 carries the phosphoserine modification. Polar residues predominate over residues 1858–1867 (SGPSVLSQVH).

The protein belongs to the TAF1 family. As to quaternary structure, component of the TFIID basal transcription factor complex, composed of TATA-box-binding protein TBP, and a number of TBP-associated factors (TAFs). TFIID consists of at least TBP, TAF1, TAF2, TAF3, TAF4, TAF5, TAF6, TAF7, TAF8, TAF9, TAF10, TAF11, TAF12 and TAF13. Interacts with TAF7; the interaction is direct. TAF1, when part of the TFIID complex, interacts with C-terminus of TP53. Part of a TFIID-containing RNA polymerase II pre-initiation complex that is composed of TBP and at least GTF2A1, GTF2A2, GTF2E1, GTF2E2, GTF2F1, GTF2H2, GTF2H3, GTF2H4, GTF2H5, GTF2B, TCEA1, ERCC2, ERCC3, TAF1, TAF2, TAF3, TAF4, TAF5, TAF6, TAF7, TAF8, TAF9, TAF10, TAF11, TAF12 and TAF13. Component of some MLL1/MLL complex, at least composed of the core components KMT2A/MLL1, ASH2L, HCFC1/HCF1, WDR5 and RBBP5, as well as the facultative components BACC1, CHD8, E2F6, HSP70, INO80C, KANSL1, LAS1L, MAX, MCRS1, MGA, KAT8/MOF, PELP1, PHF20, PRP31, RING2, RUVB1/TIP49A, RUVB2/TIP49B, SENP3, TAF1, TAF4, TAF6, TAF7, TAF9 and TEX10. RB1 interacts with the N-terminal domain of TAF1. Interacts with ASF1A and ASF1B. Interacts (via bromo domains) with acetylated lysine residues on the N-terminus of histone H1.4, H2A, H2B, H3 and H4 (in vitro). Requires Mg(2+) as cofactor. Phosphorylated by casein kinase II in vitro.

The protein localises to the nucleus. It catalyses the reaction L-seryl-[protein] + ATP = O-phospho-L-seryl-[protein] + ADP + H(+). The enzyme catalyses L-threonyl-[protein] + ATP = O-phospho-L-threonyl-[protein] + ADP + H(+). It carries out the reaction L-lysyl-[protein] + acetyl-CoA = N(6)-acetyl-L-lysyl-[protein] + CoA + H(+). Autophosphorylates on Ser residues. Inhibited by retinoblastoma tumor suppressor protein, RB1. Binding to TAF1 or CIITA inhibits the histone acetyltransferase activity. Functionally, the TFIID basal transcription factor complex plays a major role in the initiation of RNA polymerase II (Pol II)-dependent transcription. TFIID recognizes and binds promoters with or without a TATA box via its subunit TBP, a TATA-box-binding protein, and promotes assembly of the pre-initiation complex (PIC). The TFIID complex consists of TBP and TBP-associated factors (TAFs), including TAF1, TAF2, TAF3, TAF4, TAF5, TAF6, TAF7, TAF8, TAF9, TAF10, TAF11, TAF12 and TAF13. TAF1 is the largest component and core scaffold of the TFIID complex, involved in nucleating complex assembly. TAF1 forms a promoter DNA binding subcomplex of TFIID, together with TAF7 and TAF2. Contains novel N- and C-terminal Ser/Thr kinase domains which can autophosphorylate or transphosphorylate other transcription factors. Phosphorylates TP53 on 'Thr-55' which leads to MDM2-mediated degradation of TP53. Phosphorylates GTF2A1 and GTF2F1 on Ser residues. Possesses DNA-binding activity. Exhibits histone acetyltransferase activity towards histones H3 and H4. Essential for progression of the G1 phase of the cell cycle. The sequence is that of Transcription initiation factor TFIID subunit 1 from Mus musculus (Mouse).